The primary structure comprises 166 residues: PTS system glucose-specific EIIA component (166 aa).

The 105-residue stretch at Asp34 to Asn138 folds into the PTS EIIA type-1 domain. Zn(2+) contacts are provided by His71 and His86. His86 serves as the catalytic Tele-phosphohistidine intermediate; for EIIA activity. At His86 the chain carries Phosphohistidine; by HPr.

Heterodimer with glycerol kinase (glpk). Requires Zn(2+) as cofactor.

It is found in the cytoplasm. In terms of biological role, the phosphoenolpyruvate-dependent sugar phosphotransferase system (sugar PTS), a major carbohydrate active transport system, catalyzes the phosphorylation of incoming sugar substrates concomitantly with their translocation across the cell membrane. The enzyme II complex composed of PtsG and Crr is involved in glucose transport. The sequence is that of PTS system glucose-specific EIIA component (crr) from Staphylococcus aureus (strain COL).